Here is a 233-residue protein sequence, read N- to C-terminus: MKSAILVFPGINRERDMARALKLISGHEPAMVWHAETSLPKGTDLVVMPGGFSYGDYLRCGAIAARSPVMDAVRAFAADGGLVLGVCNGFQILCESGLLPGILMRNARLKFICHDVHLRVERSDTPFTRGYNAGQVIRVPVAHGEGNYAADEETIRRLEGEGRVLYRYCSATGEIGDTHNINGAAQSIAGIVNVRGNVLGMMPHPENHVEDIMGCTDGRGLFAGLVAHLERAA.

In terms of domain architecture, Glutamine amidotransferase type-1 spans 3-233 (SAILVFPGIN…GLVAHLERAA (231 aa)). C87 (nucleophile) is an active-site residue. Active-site residues include H204 and E206.

Part of the FGAM synthase complex composed of 1 PurL, 1 PurQ and 2 PurS subunits.

It localises to the cytoplasm. It carries out the reaction N(2)-formyl-N(1)-(5-phospho-beta-D-ribosyl)glycinamide + L-glutamine + ATP + H2O = 2-formamido-N(1)-(5-O-phospho-beta-D-ribosyl)acetamidine + L-glutamate + ADP + phosphate + H(+). It catalyses the reaction L-glutamine + H2O = L-glutamate + NH4(+). Its pathway is purine metabolism; IMP biosynthesis via de novo pathway; 5-amino-1-(5-phospho-D-ribosyl)imidazole from N(2)-formyl-N(1)-(5-phospho-D-ribosyl)glycinamide: step 1/2. Functionally, part of the phosphoribosylformylglycinamidine synthase complex involved in the purines biosynthetic pathway. Catalyzes the ATP-dependent conversion of formylglycinamide ribonucleotide (FGAR) and glutamine to yield formylglycinamidine ribonucleotide (FGAM) and glutamate. The FGAM synthase complex is composed of three subunits. PurQ produces an ammonia molecule by converting glutamine to glutamate. PurL transfers the ammonia molecule to FGAR to form FGAM in an ATP-dependent manner. PurS interacts with PurQ and PurL and is thought to assist in the transfer of the ammonia molecule from PurQ to PurL. This is Phosphoribosylformylglycinamidine synthase subunit PurQ from Nitrobacter hamburgensis (strain DSM 10229 / NCIMB 13809 / X14).